A 1215-amino-acid chain; its full sequence is DNA-directed RNA polymerase subunit beta' (1215 aa).

Zn(2+) is bound by residues Cys-60, Cys-62, Cys-75, and Cys-78. Asp-450, Asp-452, and Asp-454 together coordinate Mg(2+). 4 residues coordinate Zn(2+): Cys-818, Cys-892, Cys-899, and Cys-902.

The protein belongs to the RNA polymerase beta' chain family. As to quaternary structure, the RNAP catalytic core consists of 2 alpha, 1 beta, 1 beta' and 1 omega subunit. When a sigma factor is associated with the core the holoenzyme is formed, which can initiate transcription. It depends on Mg(2+) as a cofactor. Zn(2+) serves as cofactor.

The enzyme catalyses RNA(n) + a ribonucleoside 5'-triphosphate = RNA(n+1) + diphosphate. DNA-dependent RNA polymerase catalyzes the transcription of DNA into RNA using the four ribonucleoside triphosphates as substrates. The sequence is that of DNA-directed RNA polymerase subunit beta' from Streptococcus sanguinis (strain SK36).